Consider the following 95-residue polypeptide: Aspartyl/glutamyl-tRNA(Asn/Gln) amidotransferase subunit C (95 aa).

It belongs to the GatC family. As to quaternary structure, heterotrimer of A, B and C subunits.

The enzyme catalyses L-glutamyl-tRNA(Gln) + L-glutamine + ATP + H2O = L-glutaminyl-tRNA(Gln) + L-glutamate + ADP + phosphate + H(+). It carries out the reaction L-aspartyl-tRNA(Asn) + L-glutamine + ATP + H2O = L-asparaginyl-tRNA(Asn) + L-glutamate + ADP + phosphate + 2 H(+). Allows the formation of correctly charged Asn-tRNA(Asn) or Gln-tRNA(Gln) through the transamidation of misacylated Asp-tRNA(Asn) or Glu-tRNA(Gln) in organisms which lack either or both of asparaginyl-tRNA or glutaminyl-tRNA synthetases. The reaction takes place in the presence of glutamine and ATP through an activated phospho-Asp-tRNA(Asn) or phospho-Glu-tRNA(Gln). This Trichlorobacter lovleyi (strain ATCC BAA-1151 / DSM 17278 / SZ) (Geobacter lovleyi) protein is Aspartyl/glutamyl-tRNA(Asn/Gln) amidotransferase subunit C.